The chain runs to 485 residues: Glutamyl-tRNA(Gln) amidotransferase subunit A (485 aa).

Residues K80 and S155 each act as charge relay system in the active site. The active-site Acyl-ester intermediate is the S179.

It belongs to the amidase family. GatA subfamily. Heterotrimer of A, B and C subunits.

The catalysed reaction is L-glutamyl-tRNA(Gln) + L-glutamine + ATP + H2O = L-glutaminyl-tRNA(Gln) + L-glutamate + ADP + phosphate + H(+). Its function is as follows. Allows the formation of correctly charged Gln-tRNA(Gln) through the transamidation of misacylated Glu-tRNA(Gln) in organisms which lack glutaminyl-tRNA synthetase. The reaction takes place in the presence of glutamine and ATP through an activated gamma-phospho-Glu-tRNA(Gln). The protein is Glutamyl-tRNA(Gln) amidotransferase subunit A of Endomicrobium trichonymphae.